Consider the following 609-residue polypeptide: Replication protein A 70 kDa DNA-binding subunit (609 aa).

Positions 112–164 are disordered; it reads IGNPHPYNDGQGPPQPAAPAPASAPPPSKPQNISAPPPPSMNRGASKLFGGGS. Pro residues predominate over residues 124–151; the sequence is PPQPAAPAPASAPPPSKPQNISAPPPPS. The OB DNA-binding region spans 189–273; that stretch reads WTVRARVTNK…VKNDYEMTFN (85 aa). A C4-type zinc finger spans residues 472–494; sequence CPSQDCNKKVIDQQNGLFRCEKC.

The protein belongs to the replication factor A protein 1 family. As to quaternary structure, component of the heterotrimeric canonical replication protein A complex (RPA). Interacts with rpain-a.

The protein resides in the nucleus. It is found in the PML body. In terms of biological role, as part of the heterotrimeric replication protein A complex (RPA/RP-A), binds and stabilizes single-stranded DNA intermediates, that form during DNA replication or upon DNA stress. It prevents their reannealing and in parallel, recruits and activates different proteins and complexes involved in DNA metabolism. Thereby, it plays an essential role both in DNA replication and the cellular response to DNA damage. This chain is Replication protein A 70 kDa DNA-binding subunit (rpa1), found in Xenopus tropicalis (Western clawed frog).